A 200-amino-acid polypeptide reads, in one-letter code: DNA dC-&gt;dU-editing enzyme APOBEC-3H (200 aa).

The 123-residue stretch at L4–L126 folds into the CMP/dCMP-type deaminase domain. H54 provides a ligand contact to Zn(2+). The Proton donor role is filled by E56. Positions 85 and 88 each coordinate Zn(2+). A coiled-coil region spans residues Y160 to I182.

The protein belongs to the cytidine and deoxycytidylate deaminase family. Homodimer. Interacts with AGO1, AGO2 and AGO3. It depends on Zn(2+) as a cofactor. Post-translationally, (Microbial infection) Following infection by some HIV-1 strains, such as isolate BRU/LAI, can be ubiquitinated by a cullin-5-RING E3 ubiquitin-protein ligase complex (ECS complex) hijacked by the HIV-1 Vif protein, leading to its degradation. Ubiquitination by the ECS complex is however less efficent compared to APOBEC3G or APOBEC3G. As to expression, expressed in lymphoid organs. Also detected in non-lymphoid tissues including lung, testis, ovary, fetal liver and skin.

The protein resides in the cytoplasm. It is found in the nucleus. Its subcellular location is the P-body. The enzyme catalyses a 2'-deoxycytidine in single-stranded DNA + H2O + H(+) = a 2'-deoxyuridine in single-stranded DNA + NH4(+). With respect to regulation, APOBEC3H activity is regulated by RNA. While RNA-binding inhibits the DNA deaminase activity, double-stranded RNA is required for HIV-1 restriction by promoting APOBEC3H homodimerization and packaging into retroviral nucleocapsids. (Microbial infection) Antiviral activity is inhibited to some extent by the HIV-1 virion infectivity factor (VIF), that prevents its incorporation into progeny virions by both inhibiting its translation and/or by inducing its ubiquitination and subsequent degradation by the 26S proteasome. DNA deaminase (cytidine deaminase) which acts as an inhibitor of retrovirus replication and retrotransposon mobility via deaminase-dependent and -independent mechanisms. The A3H-var/haplotype 2 exhibits antiviral activity against vif-deficient HIV-1. After the penetration of retroviral nucleocapsids into target cells of infection and the initiation of reverse transcription, it can induce the conversion of cytosine to uracil in the minus-sense single-strand viral DNA, leading to G-to-A hypermutations in the subsequent plus-strand viral DNA. The resultant detrimental levels of mutations in the proviral genome, along with a deamination-independent mechanism that works prior to the proviral integration, together exert efficient antiretroviral effects in infected target cells. Selectively targets single-stranded DNA and does not deaminate double-stranded DNA or single- or double-stranded RNA. Exhibits antiviral activity also against T-cell leukemia virus type 1 (HTLV-1) and may inhibit the mobility of LTR and non-LTR retrotransposons. In Homo sapiens (Human), this protein is DNA dC-&gt;dU-editing enzyme APOBEC-3H.